A 362-amino-acid chain; its full sequence is uncharacterized protein (362 aa).

The span at 314-323 shows a compositional bias: basic and acidic residues; that stretch reads GEEKEPKQES. The interval 314 to 362 is disordered; the sequence is GEEKEPKQESQEQLFNPFTIDEMLTEEQQQQQEEENNATEEEGDTVKLG. The span at 345 to 356 shows a compositional bias: acidic residues; the sequence is QEEENNATEEEG.

This is an uncharacterized protein from Acidianus two-tailed virus (ATV).